Here is a 129-residue protein sequence, read N- to C-terminus: Glycoprotein hormone alpha-2 (129 aa).

The first 23 residues, 1–23 (MPMASPQTLVLYLLVLAVTEAWG), serve as a signal peptide directing secretion. 4 cysteine pairs are disulfide-bonded: cysteine 31/cysteine 89, cysteine 48/cysteine 103, cysteine 57/cysteine 119, and cysteine 61/cysteine 121. N-linked (GlcNAc...) asparagine glycosylation is found at asparagine 37 and asparagine 81.

This sequence belongs to the glycoprotein hormones subunit alpha family. In terms of assembly, heterodimer with GPHB5; this heterodimer interacts with thyroid-stimulating hormone receptor (TSHR), and hence stimulates cAMP production. In terms of processing, glycosylated. Found in a variety of tissues.

The protein localises to the secreted. Functionally, functions as a heterodimeric glycoprotein hormone with GPHB5 able to bind and activate the thyroid-stimulating hormone receptor (TSHR), leading to increased cAMP production. Plays a central role in controlling thyroid cell metabolism. The protein is Glycoprotein hormone alpha-2 (GPHA2) of Homo sapiens (Human).